We begin with the raw amino-acid sequence, 688 residues long: Glycine--tRNA ligase beta subunit (688 aa).

It belongs to the class-II aminoacyl-tRNA synthetase family. Tetramer of two alpha and two beta subunits.

The protein resides in the cytoplasm. The enzyme catalyses tRNA(Gly) + glycine + ATP = glycyl-tRNA(Gly) + AMP + diphosphate. This chain is Glycine--tRNA ligase beta subunit, found in Lactobacillus delbrueckii subsp. bulgaricus (strain ATCC BAA-365 / Lb-18).